We begin with the raw amino-acid sequence, 693 residues long: Cyclin-dependent kinase G-1 (693 aa).

Residues 1–10 (MAAGSHGGYR) show a composition bias toward gly residues. 2 disordered regions span residues 1–148 (MAAG…ARDP) and 236–308 (KKKK…DDYP). Residues 13-24 (EVAREREHDVGV) show a composition bias toward basic and acidic residues. Positions 26–39 (RRSKEHYHHRHPSR) are enriched in basic residues. Basic and acidic residues-rich tracts occupy residues 40-54 (HRDSERRRDGGRSGG), 75-87 (RPSEGRTEDREPG), and 97-122 (RSGERPMKTREPRENGVTRVSKEEAK). Positions 268-284 (SVRSSSRSSDSGVLQGS) are enriched in low complexity. A compositionally biased stretch (basic and acidic residues) spans 287–304 (RDLEVEKGDNIDVEKAAD). A Protein kinase domain is found at 349-640 (FERLNTINEG…AEDALNHEWF (292 aa)). ATP is bound by residues 355–363 (INEGTYGVV) and Lys-378. The residue at position 359 (Thr-359) is a Phosphothreonine. Phosphotyrosine is present on Tyr-360. Catalysis depends on Asp-473, which acts as the Proton acceptor. Ser-500 bears the Phosphoserine mark. Position 506 is a phosphothreonine (Thr-506). The disordered stretch occupies residues 664–693 (RFKKHMKSPDPLEEQWMKEQGNNGDRGLFG).

It belongs to the protein kinase superfamily. CMGC Ser/Thr protein kinase family. CDC2/CDKX subfamily.

The enzyme catalyses L-seryl-[protein] + ATP = O-phospho-L-seryl-[protein] + ADP + H(+). The catalysed reaction is L-threonyl-[protein] + ATP = O-phospho-L-threonyl-[protein] + ADP + H(+). It catalyses the reaction [DNA-directed RNA polymerase] + ATP = phospho-[DNA-directed RNA polymerase] + ADP + H(+). This chain is Cyclin-dependent kinase G-1 (CDKG-1), found in Oryza sativa subsp. indica (Rice).